The following is a 485-amino-acid chain: Glutamyl-tRNA(Gln) amidotransferase subunit A (485 aa).

Active-site charge relay system residues include K78 and S153. The Acyl-ester intermediate role is filled by S177.

Belongs to the amidase family. GatA subfamily. As to quaternary structure, heterotrimer of A, B and C subunits.

It carries out the reaction L-glutamyl-tRNA(Gln) + L-glutamine + ATP + H2O = L-glutaminyl-tRNA(Gln) + L-glutamate + ADP + phosphate + H(+). Functionally, allows the formation of correctly charged Gln-tRNA(Gln) through the transamidation of misacylated Glu-tRNA(Gln) in organisms which lack glutaminyl-tRNA synthetase. The reaction takes place in the presence of glutamine and ATP through an activated gamma-phospho-Glu-tRNA(Gln). The sequence is that of Glutamyl-tRNA(Gln) amidotransferase subunit A from Pelobacter propionicus (strain DSM 2379 / NBRC 103807 / OttBd1).